Consider the following 85-residue polypeptide: Small ribosomal subunit protein bS16c (85 aa).

The protein belongs to the bacterial ribosomal protein bS16 family.

It localises to the plastid. Its subcellular location is the chloroplast. The protein is Small ribosomal subunit protein bS16c of Cucumis sativus (Cucumber).